The chain runs to 142 residues: UPF0102 protein Bamb_0202 (142 aa).

The tract at residues 1-23 (MCHAAPAAPASGRGLPHGGGNFS) is disordered.

The protein belongs to the UPF0102 family.

The sequence is that of UPF0102 protein Bamb_0202 from Burkholderia ambifaria (strain ATCC BAA-244 / DSM 16087 / CCUG 44356 / LMG 19182 / AMMD) (Burkholderia cepacia (strain AMMD)).